We begin with the raw amino-acid sequence, 330 residues long: Aspartate--ammonia ligase (330 aa).

Belongs to the class-II aminoacyl-tRNA synthetase family. AsnA subfamily.

It is found in the cytoplasm. The catalysed reaction is L-aspartate + NH4(+) + ATP = L-asparagine + AMP + diphosphate + H(+). The protein operates within amino-acid biosynthesis; L-asparagine biosynthesis; L-asparagine from L-aspartate (ammonia route): step 1/1. The sequence is that of Aspartate--ammonia ligase from Haemophilus influenzae (strain ATCC 51907 / DSM 11121 / KW20 / Rd).